Reading from the N-terminus, the 193-residue chain is Large ribosomal subunit protein eL19A (193 aa).

The interval 156–179 (QEQQDARRARAKAARQRRAKAVEE) is disordered. Positions 164 to 174 (ARAKAARQRRA) are enriched in basic residues.

This sequence belongs to the eukaryotic ribosomal protein eL19 family. As to quaternary structure, component of the large ribosomal subunit (LSU). Mature yeast ribosomes consist of a small (40S) and a large (60S) subunit. The 40S small subunit contains 1 molecule of ribosomal RNA (18S rRNA) and at least 33 different proteins. The large 60S subunit contains 3 rRNA molecules (25S, 5.8S and 5S rRNA) and at least 46 different proteins. eL19 lies in close proximity to the binding site for eukaryotic initiation factor eIF4G.

Its subcellular location is the cytoplasm. Its function is as follows. Component of the ribosome, a large ribonucleoprotein complex responsible for the synthesis of proteins in the cell. The small ribosomal subunit (SSU) binds messenger RNAs (mRNAs) and translates the encoded message by selecting cognate aminoacyl-transfer RNA (tRNA) molecules. The large subunit (LSU) contains the ribosomal catalytic site termed the peptidyl transferase center (PTC), which catalyzes the formation of peptide bonds, thereby polymerizing the amino acids delivered by tRNAs into a polypeptide chain. The nascent polypeptides leave the ribosome through a tunnel in the LSU and interact with protein factors that function in enzymatic processing, targeting, and the membrane insertion of nascent chains at the exit of the ribosomal tunnel. eL19 may play a role in the last stages of translation initiation, in particular subunit joining and shedding/releasing factors. In Schizosaccharomyces pombe (strain 972 / ATCC 24843) (Fission yeast), this protein is Large ribosomal subunit protein eL19A (rpl1901).